The following is a 183-amino-acid chain: Peptide deformylase-like (183 aa).

E140 is an active-site residue.

It belongs to the polypeptide deformylase family.

This chain is Peptide deformylase-like, found in Rickettsia conorii (strain ATCC VR-613 / Malish 7).